The following is a 206-amino-acid chain: MASEVVIRRATAADHGDLCRVCLLTGDSGRDASSREDDPTLLGMIYAVPYQVGAPDFAFVLEDAEGVCGYLLGAPDTLSFQHFLEKEWLPPLRAGLTDPGPDPAAWQGSDWARDAIHRPPALPPIDLAAYPAHGHIDLLPRAQGRGVGSRAMDHLEAALAAAGAPGMHLQVSPENPRALGFYEHRGFRELCRSEDEVVVGRRLLDE.

Residues 5-205 (VVIRRATAAD…EVVVGRRLLD (201 aa)) form the N-acetyltransferase domain. Acetyl-CoA is bound by residues 135–138 (HIDL), 144–148 (GRGVG), 175–177 (NPR), and His-184.

This sequence belongs to the acetyltransferase family. In terms of assembly, monomer.

In terms of biological role, binds acetyl-CoA, but not butyryl-CoA or decanoyl-CoA. May have acetyltransferase activity. The polypeptide is Putative acetyltransferase OgpAT (Oceanicola granulosus (strain ATCC BAA-861 / DSM 15982 / KCTC 12143 / HTCC2516)).